Consider the following 397-residue polypeptide: DNA-directed RNA polymerase subunit Rpo1C (397 aa).

It belongs to the RNA polymerase beta' chain family. Part of the RNA polymerase complex.

It is found in the cytoplasm. It catalyses the reaction RNA(n) + a ribonucleoside 5'-triphosphate = RNA(n+1) + diphosphate. Its function is as follows. DNA-dependent RNA polymerase (RNAP) catalyzes the transcription of DNA into RNA using the four ribonucleoside triphosphates as substrates. Forms part of the jaw domain. The chain is DNA-directed RNA polymerase subunit Rpo1C from Halobacterium salinarum (strain ATCC 29341 / DSM 671 / R1).